Consider the following 63-residue polypeptide: Large ribosomal subunit protein bL28 (63 aa).

Belongs to the bacterial ribosomal protein bL28 family.

This chain is Large ribosomal subunit protein bL28, found in Clostridium perfringens (strain SM101 / Type A).